A 288-amino-acid chain; its full sequence is Transposase InsF for insertion sequence IS3fB (288 aa).

Positions 124–287 (YASGPNQKWA…SPEQFENQNL (164 aa)) constitute an Integrase catalytic domain.

Belongs to the transposase IS3/IS150/IS904 family.

Its function is as follows. Involved in the transposition of the insertion sequence IS3. The polypeptide is Transposase InsF for insertion sequence IS3fB (insF7) (Escherichia coli (strain K12)).